The sequence spans 192 residues: Interleukin-18 (192 aa).

Positions Met1–Asp35 are excised as a propeptide.

This sequence belongs to the IL-1 family. Forms a ternary complex with ligand-binding receptor subunit IL18R1 and signaling receptor subunit IL18RAP at the plasma membrane. Mature IL18 first binds to IL18R1 forming a low affinity binary complex, which then interacts with IL18RAP to form a high affinity ternary complex that signals inside the cell. Interacts with cargo receptor TMED10; the interaction mediates the translocation from the cytoplasm into the ERGIC (endoplasmic reticulum-Golgi intermediate compartment) and thereby secretion. The pro-IL-18 precursor is processed by CASP1, CASP4 or CASP5 to yield its mature, active form. The pro-IL-18 precursor features autoinhibitory interactions between the propeptide and the post-cleavage-site region, preventing recognition by the IL18R1 receptor. Processing by CASP1, CASP4 or CASP5 induces conformational changes to generate critical receptor-binding sites. The mature form is then secreted and released in the extracellular milieu by passing through the gasdermin-D (GSDMD) pore. In contrast, cleavage by CASP3 inactivates IL18.

The protein localises to the cytoplasm. The protein resides in the cytosol. It localises to the secreted. Its function is as follows. Pro-inflammatory cytokine primarily involved in epithelial barrier repair, polarized T-helper 1 (Th1) cell and natural killer (NK) cell immune responses. Upon binding to IL18R1 and IL18RAP, forms a signaling ternary complex which activates NF-kappa-B, triggering synthesis of inflammatory mediators. Synergizes with IL12/interleukin-12 to induce IFNG synthesis from T-helper 1 (Th1) cells and natural killer (NK) cells. Involved in transduction of inflammation downstream of pyroptosis: its mature form is specifically released in the extracellular milieu by passing through the gasdermin-D (GSDMD) pore. This is Interleukin-18 (IL18) from Felis catus (Cat).